A 157-amino-acid chain; its full sequence is MRVGIGYDVHKLVADRKLIIGGVHIPYEKGLLGHSDADVLLHAIKDAILGAAALGDIGKHFPDTDERYKGANSLELLKEVSNLIKSKGYKIHNLDATIIAQKPKMASHIEQMRANIAAAINVDMDSVNVKATTTEGLGFVGVGEGIAANAIASIIKA.

Aspartate 8 and histidine 10 together coordinate a divalent metal cation. 4-CDP-2-C-methyl-D-erythritol 2-phosphate is bound by residues 8–10 and 34–35; these read DVH and HS. Histidine 42 contributes to the a divalent metal cation binding site. Residues 56–58, 61–65, 100–106, 132–135, and phenylalanine 139 contribute to the 4-CDP-2-C-methyl-D-erythritol 2-phosphate site; these read DIG, FPDTD, AQKPKMA, and TTTE.

Belongs to the IspF family. Homotrimer. Requires a divalent metal cation as cofactor.

It catalyses the reaction 4-CDP-2-C-methyl-D-erythritol 2-phosphate = 2-C-methyl-D-erythritol 2,4-cyclic diphosphate + CMP. It participates in isoprenoid biosynthesis; isopentenyl diphosphate biosynthesis via DXP pathway; isopentenyl diphosphate from 1-deoxy-D-xylulose 5-phosphate: step 4/6. Involved in the biosynthesis of isopentenyl diphosphate (IPP) and dimethylallyl diphosphate (DMAPP), two major building blocks of isoprenoid compounds. Catalyzes the conversion of 4-diphosphocytidyl-2-C-methyl-D-erythritol 2-phosphate (CDP-ME2P) to 2-C-methyl-D-erythritol 2,4-cyclodiphosphate (ME-CPP) with a corresponding release of cytidine 5-monophosphate (CMP). The sequence is that of 2-C-methyl-D-erythritol 2,4-cyclodiphosphate synthase from Alkaliphilus oremlandii (strain OhILAs) (Clostridium oremlandii (strain OhILAs)).